A 414-amino-acid chain; its full sequence is uncharacterized protein (414 aa).

Disordered stretches follow at residues S136–T168, P297–S333, and A346–K414. Residues P350–S359 are compositionally biased toward polar residues. The segment covering S399–K414 has biased composition (basic and acidic residues).

This is an uncharacterized protein from Homo sapiens (Human).